The primary structure comprises 344 residues: L-threonine 3-dehydrogenase (344 aa).

Cys-42 contacts Zn(2+). Active-site charge relay system residues include Thr-44 and His-47. Zn(2+) is bound by residues His-67, Glu-68, Cys-97, Cys-100, Cys-103, and Cys-111. NAD(+)-binding positions include Ile-179, Asp-199, Arg-204, 266–268 (LGI), and 290–291 (IY).

Belongs to the zinc-containing alcohol dehydrogenase family. As to quaternary structure, homotetramer. Zn(2+) is required as a cofactor.

The protein localises to the cytoplasm. It catalyses the reaction L-threonine + NAD(+) = (2S)-2-amino-3-oxobutanoate + NADH + H(+). Its pathway is amino-acid degradation; L-threonine degradation via oxydo-reductase pathway; glycine from L-threonine: step 1/2. In terms of biological role, catalyzes the NAD(+)-dependent oxidation of L-threonine to 2-amino-3-ketobutyrate. The protein is L-threonine 3-dehydrogenase of Mesorhizobium japonicum (strain LMG 29417 / CECT 9101 / MAFF 303099) (Mesorhizobium loti (strain MAFF 303099)).